The primary structure comprises 345 residues: MTTVLAIETSCDETAAAVVKNRHIYSNVIASQIAAHRPYGGVVPEVASRQHLENINAVIDEALAVAGLGWAEIDAIAATCAPGLVGSLLIGLTAAKTLALVHQKPFLGIHHLEGHIAASYLAHPDLHPPFLCLLVSGGHTSLIYVKDIGDYETLGQTRDDAAGEAFDKVARLLGLGYPGGPVIDRLASQGNPAAFHLPEGNISLPGGGYHPYDSSFSGLKTAVLRLVEKLKTEGDLPIADLAASFQDCVARSLTRRTIACALDYSLETIAIGGGVAANRGLRSHLQAAAAAHNLRVLFPPLSLCTDNAAMIACAAAAHLERGHTSPLTLGGQSRLAITEVMQLYQ.

The Fe cation site is built by His111 and His115. Substrate-binding positions include 134–138, Asp167, Gly180, Asp184, and Asn278; that span reads LVSGG. Asp306 contacts Fe cation.

Belongs to the KAE1 / TsaD family. Fe(2+) serves as cofactor.

It localises to the cytoplasm. The enzyme catalyses L-threonylcarbamoyladenylate + adenosine(37) in tRNA = N(6)-L-threonylcarbamoyladenosine(37) in tRNA + AMP + H(+). Functionally, required for the formation of a threonylcarbamoyl group on adenosine at position 37 (t(6)A37) in tRNAs that read codons beginning with adenine. Is involved in the transfer of the threonylcarbamoyl moiety of threonylcarbamoyl-AMP (TC-AMP) to the N6 group of A37, together with TsaE and TsaB. TsaD likely plays a direct catalytic role in this reaction. In Cyanothece sp. (strain PCC 7425 / ATCC 29141), this protein is tRNA N6-adenosine threonylcarbamoyltransferase.